The following is a 200-amino-acid chain: Dephospho-CoA kinase (200 aa).

Residues 4–200 form the DPCK domain; that stretch reads TIGLTGSVAT…TFIERFVNNK (197 aa). 12–17 contacts ATP; sequence ATGKST.

It belongs to the CoaE family.

The protein resides in the cytoplasm. It catalyses the reaction 3'-dephospho-CoA + ATP = ADP + CoA + H(+). Its pathway is cofactor biosynthesis; coenzyme A biosynthesis; CoA from (R)-pantothenate: step 5/5. Functionally, catalyzes the phosphorylation of the 3'-hydroxyl group of dephosphocoenzyme A to form coenzyme A. In Listeria innocua serovar 6a (strain ATCC BAA-680 / CLIP 11262), this protein is Dephospho-CoA kinase.